We begin with the raw amino-acid sequence, 202 residues long: MPIGVPSVPFRLPGSQYERWIDIYTRLSQERIIFLGQEVNDSIANRIVAFLLYLDSDDPSKPIYLYINSPGGSVTAGMAIYDTMQYIKAEVITICVGLAASMGAFLLASGAPGKRLALPHARIMIHQPMGGTGRRQATDIDIEAREILRIRQQLNEIMAQRTGQTVEKIAKDTDRDYFLSAAEAKEYGLIDKVIENSTMGNN.

The active-site Nucleophile is S101. H126 is a catalytic residue.

Belongs to the peptidase S14 family. In terms of assembly, fourteen ClpP subunits assemble into 2 heptameric rings which stack back to back to give a disk-like structure with a central cavity, resembling the structure of eukaryotic proteasomes.

It localises to the cytoplasm. It carries out the reaction Hydrolysis of proteins to small peptides in the presence of ATP and magnesium. alpha-casein is the usual test substrate. In the absence of ATP, only oligopeptides shorter than five residues are hydrolyzed (such as succinyl-Leu-Tyr-|-NHMec, and Leu-Tyr-Leu-|-Tyr-Trp, in which cleavage of the -Tyr-|-Leu- and -Tyr-|-Trp bonds also occurs).. Its function is as follows. Cleaves peptides in various proteins in a process that requires ATP hydrolysis. Has a chymotrypsin-like activity. Plays a major role in the degradation of misfolded proteins. The polypeptide is Probable ATP-dependent Clp protease proteolytic subunit 3 (Synechocystis sp. (strain ATCC 27184 / PCC 6803 / Kazusa)).